Consider the following 323-residue polypeptide: uncharacterized protein (323 aa).

A run of 2 helical transmembrane segments spans residues 232–252 (LASY…FIVL) and 267–287 (SLIV…GVIG).

It belongs to the glycosyltransferase 2 family. GtrB subfamily.

Its subcellular location is the cell membrane. This is an uncharacterized protein from Bacillus subtilis (strain 168).